A 531-amino-acid polypeptide reads, in one-letter code: Serine protease gd (531 aa).

Positions 1 to 19 are cleaved as a signal peptide; the sequence is MRLHLAAILILCIEHVTKA. The interval 155–174 is disordered; that stretch reads PEEEEVRKTDDKPPSTPHIQ. A Peptidase S1 domain is found at 246–531; sequence IESDSADSLP…FLDWITAFVI (286 aa). A glycan (N-linked (GlcNAc...) asparagine) is linked at Asn272. The cysteines at positions 280 and 296 are disulfide-linked. Active-site charge relay system residues include His295 and Asp350. N-linked (GlcNAc...) asparagine glycosylation is found at Asn397 and Asn445. A disulfide bond links Cys432 and Cys449. Ser471 functions as the Charge relay system in the catalytic mechanism.

The protein belongs to the peptidase S1 family. Post-translationally, proteolytically activated by the protease ndl. In terms of tissue distribution, expression begins in previtellogenic stages and is seen in germline-derived nurse cells of the germarium. Expression continues throughout oogenesis with transcripts from the nurse cells accumulating in the oocytes. Most abundant in the ovaries, the level of protein decreases from the moment of egg laying and is essentially gone by 4 hours.

Its subcellular location is the secreted. Its function is as follows. Component of the extracellular signaling pathway that establishes the dorsal-ventral pathway of the embryo. A protease cascade involving ndl, gd, snk and ea results in activation of the spz Toll receptor ligand; acts downstream of ndl but upstream of snk and ea. Activation of ea requires activation of the ndl-gd-snk protease cascade and sulfation of a vitelline membrane component by pip. Localized activation of the Toll receptor in the ventral region of the embryo defines cell identities along the dorsal-ventral continuum. This is Serine protease gd from Drosophila melanogaster (Fruit fly).